The primary structure comprises 295 residues: Iron-sulfur cluster carrier protein (295 aa).

38–45 (GKGGVGKS) provides a ligand contact to ATP.

It belongs to the Mrp/NBP35 ATP-binding proteins family. As to quaternary structure, homodimer.

Functionally, binds and transfers iron-sulfur (Fe-S) clusters to target apoproteins. Can hydrolyze ATP. This chain is Iron-sulfur cluster carrier protein, found in Pyrococcus furiosus (strain ATCC 43587 / DSM 3638 / JCM 8422 / Vc1).